The sequence spans 112 residues: Putative pterin-4-alpha-carbinolamine dehydratase (112 aa).

The protein belongs to the pterin-4-alpha-carbinolamine dehydratase family.

It carries out the reaction (4aS,6R)-4a-hydroxy-L-erythro-5,6,7,8-tetrahydrobiopterin = (6R)-L-erythro-6,7-dihydrobiopterin + H2O. This Shewanella sp. (strain MR-4) protein is Putative pterin-4-alpha-carbinolamine dehydratase.